The primary structure comprises 181 residues: Protein Syd (181 aa).

The protein belongs to the Syd family.

The protein resides in the cell inner membrane. In terms of biological role, interacts with the SecY protein in vivo. May bind preferentially to an uncomplexed state of SecY, thus functioning either as a chelating agent for excess SecY in the cell or as a regulatory factor that negatively controls the translocase function. The protein is Protein Syd of Escherichia fergusonii (strain ATCC 35469 / DSM 13698 / CCUG 18766 / IAM 14443 / JCM 21226 / LMG 7866 / NBRC 102419 / NCTC 12128 / CDC 0568-73).